Here is a 732-residue protein sequence, read N- to C-terminus: Catalase-peroxidase (732 aa).

A disordered region spans residues 1-29; the sequence is MTTESKCPFSGGGKPNTPRRGPSNQDWWP. Positions 96–223 form a cross-link, tryptophyl-tyrosyl-methioninium (Trp-Tyr) (with M-249); that stretch reads WHSAGTYRIG…LAAVQMGLIY (128 aa). His97 acts as the Proton acceptor in catalysis. A cross-link (tryptophyl-tyrosyl-methioninium (Tyr-Met) (with W-96)) is located at residues 223–249; that stretch reads YVNPEGPDGNPDPVAAARDIRETFARM. Heme b is bound at residue His264.

Belongs to the peroxidase family. Peroxidase/catalase subfamily. In terms of assembly, homodimer or homotetramer. The cofactor is heme b. In terms of processing, formation of the three residue Trp-Tyr-Met cross-link is important for the catalase, but not the peroxidase activity of the enzyme.

The enzyme catalyses H2O2 + AH2 = A + 2 H2O. It catalyses the reaction 2 H2O2 = O2 + 2 H2O. Bifunctional enzyme with both catalase and broad-spectrum peroxidase activity. This Serratia proteamaculans (strain 568) protein is Catalase-peroxidase.